A 432-amino-acid polypeptide reads, in one-letter code: Serine/threonine-protein kinase CDG1 (432 aa).

S-palmitoyl cysteine attachment occurs at residues Cys-4 and Cys-6. The segment covering 15 to 24 (LKDKSHKRSI) has biased composition (basic residues). Residues 15–47 (LKDKSHKRSIRNQTSSSSAQPAGTAKEVDSSSS) form a disordered region. Over residues 25–35 (RNQTSSSSAQP) the composition is skewed to polar residues. A phosphoserine mark is found at Ser-44 and Ser-47. The Protein kinase domain maps to 74 to 354 (FRNESLIGRG…SQVVECLKYI (281 aa)). ATP is bound by residues 80 to 88 (IGRGGFGTV) and Lys-102. The residue at position 147 (Tyr-147) is a Phosphotyrosine. The active-site Proton acceptor is the Asp-200. Residues Ser-204 and Ser-234 each carry the phosphoserine modification. Phosphothreonine occurs at positions 235 and 240. Tyr-248 carries the phosphotyrosine modification.

The protein belongs to the protein kinase superfamily. Ser/Thr protein kinase family. As to quaternary structure, interacts with BSU1, BSL1 and BRI1. Post-translationally, phosphorylated at Ser-44, Ser-47 and Ser-234 by BRI1. Expressed at high levels in the stamen and pollen grains. Expressed at a very low level in vegetative tissues.

It localises to the cell membrane. It carries out the reaction L-seryl-[protein] + ATP = O-phospho-L-seryl-[protein] + ADP + H(+). The catalysed reaction is L-threonyl-[protein] + ATP = O-phospho-L-threonyl-[protein] + ADP + H(+). Its activity is regulated as follows. Activated by phosphorylation at Ser-234. Functionally, serine/threonine-protein kinase involved in the positive regulation of brassinosteroid (BR) signaling and plant growth. Mediates BR signal transduction from BRI1 receptor kinase to BSU1 phosphatase. After activation by phosphorylation at Ser-234 by BRI1, CDG1 phosphorylates BSU1 at 'Ser-764' in the phosphatase domain, increasing the ability of BSU1 to inactivate the negative regulator of BR signaling ASK7/BIN2 by dephosphorylation at 'Tyr-200'. The full kinase activity of CDG1 is required for its biological function. The sequence is that of Serine/threonine-protein kinase CDG1 from Arabidopsis thaliana (Mouse-ear cress).